The chain runs to 617 residues: 1-deoxy-D-xylulose-5-phosphate synthase (617 aa).

Thiamine diphosphate contacts are provided by residues His77 and 118–120; that span reads GHS. Asp149 is a Mg(2+) binding site. Residues 150-151, Asn178, Tyr286, and Glu367 each bind thiamine diphosphate; that span reads GA. Position 178 (Asn178) interacts with Mg(2+).

This sequence belongs to the transketolase family. DXPS subfamily. Homodimer. The cofactor is Mg(2+). Thiamine diphosphate is required as a cofactor.

It catalyses the reaction D-glyceraldehyde 3-phosphate + pyruvate + H(+) = 1-deoxy-D-xylulose 5-phosphate + CO2. It participates in metabolic intermediate biosynthesis; 1-deoxy-D-xylulose 5-phosphate biosynthesis; 1-deoxy-D-xylulose 5-phosphate from D-glyceraldehyde 3-phosphate and pyruvate: step 1/1. Functionally, catalyzes the acyloin condensation reaction between C atoms 2 and 3 of pyruvate and glyceraldehyde 3-phosphate to yield 1-deoxy-D-xylulose-5-phosphate (DXP). The polypeptide is 1-deoxy-D-xylulose-5-phosphate synthase (Actinobacillus pleuropneumoniae serotype 5b (strain L20)).